The following is a 307-amino-acid chain: MGQKLGVDSRQKIRQVLGSSSKVQKHDVESIGGGGGEIVPGHSPFDDLPEDCISNIISFTSPRDVCVSASVSKSFAHAVQCDSIWEKFLPSEYESLIPPWRVFSSKKDLYFTLCYDPVLVEDGKKSFWLETASGKKCVLLAAKELWITGGNNPEYWQWIELCESSFEKVPELLNNRSFQMGGSMSTQILSLGTHYSVYIVYKIKDERHGLRDLPIQVGVGFKGQEMPKQFICFDESTDKTKEWPKKKLMKSKKRGDGWMEAEIGDFFNDGGLMGFDEVEVSIVDVTSPNLKCGVMIEGIEFRPKDCQ.

The F-box domain maps to 42–88 (HSPFDDLPEDCISNIISFTSPRDVCVSASVSKSFAHAVQCDSIWEKF).

In Arabidopsis thaliana (Mouse-ear cress), this protein is Putative F-box protein PP2-B6 (PP2B6).